Reading from the N-terminus, the 395-residue chain is ADP-ribosylation factor-like protein 13A (395 aa).

GTP-binding positions include G28–S35, D71–D75, and N130–D133.

Belongs to the small GTPase superfamily. Arf family.

The sequence is that of ADP-ribosylation factor-like protein 13A (Arl13a) from Rattus norvegicus (Rat).